The following is a 63-amino-acid chain: MKTSILFVIFGLALLFALSVAIEMEEEETDRGCGTMWSPCSTEKPCCDNFSCQPAIKWCIWSP.

The N-terminal stretch at 1-21 (MKTSILFVIFGLALLFALSVA) is a signal peptide. Positions 22-31 (IEMEEEETDR) are excised as a propeptide. 3 disulfides stabilise this stretch: cysteine 33-cysteine 47, cysteine 40-cysteine 52, and cysteine 46-cysteine 59.

As to expression, expressed by the venom gland.

The protein localises to the secreted. Its function is as follows. Inhibits preferentially tetrodotoxin-insensitive sodium currents (Nav) on rat cardiac myocytes (IC(50) is 0.26 uM) and has weaker inhibition activity toward tetrodotoxin-sensitive sodium currents on rat dorsal root ganglion (DRG) sensory neurons (IC(50) is 0.83 uM) and on cockroach dorsal unpaired median (DUM) neurons (IC(50) is 1.19 uM). Has no significant effect on potassium currents on DRG neurons. The sequence is that of U7-theraphotoxin-Cg1a from Chilobrachys guangxiensis (Chinese earth tiger tarantula).